The primary structure comprises 4262 residues: MITEQLHISLNNPIMSNHKVYGQALLPGLAYIDLIYQVFQEHGYAYQELELKNLTIFYPLIADESYDIALTIHVSERKEGTWSIIIDGQKQHGESLSDKRQYVTADMHRKEQTAFAESIDLNQWKSTADRILNLDEIYEQCRSQELVHTGMMKAEGQIYEAKEGAVIDLAVGQEALRHSDAFLFHPTLIDGSGIGSSCLISDQTMYLPLYYESFSASERLQKGCTARILSSSVRQKKELTYMTIEYFNSAGQKVAELKQFAGKSVRNMSAFHSAKEIQEERAAVSQNISRDYPAFEMYLRQLLAKQLERPAEQMDIHAGYYELGLDSSSLLTVVQEIGDKVGADLAPTLLFEFTTIAELAAHLADHYSIGEADDAVRQSPSPIDGVTSSPEIGEDIAIIGMAGRYPKAKNIQEFWEQLKAGTDCITEIPNSRWEWKESDGLDSPAGKPLSKWGGFIEEADCFDPQFFRISPREAEMMDPQERLFLETCWEAIEDAGYTPETIASPQGENKRQHVGVFAGVMHKDYSLIGAEALSEHNPFPLSLNYAQIANRVSYYCNFHGPSMAVDTVCSSSLTAVHLAIESIRNGECEAALAGGVNLSLHPAKYISYGSVGMHSSDGYCHTFGKGGDGYVSGEGVGTVLLKPLRKAEQDGDRIYAVIKGSAINHVGKVSGITVPSPVAQADVIEACLEKTGIDPRTISYVEAHGTGTSLGDPIEVQGLVKAFSRNTQDKQFCSIGSVKSNIGHAEAAAGISGLTKTVLQLHHKTLVPSLHSEELNPYLKLDQTPFFVQHETKEWEQPSFTENGVDVTYPRRAGLSSFGASGSNAHLILEEYIPAESHSETILTKNEEIVIPLSARNKDRLQAYALKLLDFLSEDVNLLALAYTMQAGRVEMEERAAFIVKDIKDLTAKLRAFANGEEEIEGCWTGRAKENQEAAGLASVNALNNNLIRDSEMMEMAKAWVQGKRVTWDDLYGDRKPLKISVPTYPFARERYWISVPEMKTSTVNHILHPLVHRNTSDFTEQRFSSVFTGTEFFLSDHVVQGQKILPGVAYLEMAREAAEKAAGDLDGEQRVVSLKDIVWVRPITIESEPKEIHIGLFPEDNGDISFDIYSSSEHKEEALTIHCQGRAVISDEAETSILNLSSIQTECSLDTVTSEQCYAAFRKIGLDYGEGYQGIEKVYVGKDQLLAKISLPAFLKNDKQHFALHPSLMDSAFHATVGFIVSSVNAAGQAQTLSLPFALQEVDIFSPCPEKIWSYIRYSSDSKAENKVRKYDIDLCDENGRVCVRMKGASMRALDGEQHSKPQLLTDSQLTGHTVMIPVWEPVSLEAEDNASFAGKRAVLCGAAEADRTFIKHHYPQISFVDIRPADDIEAIADKLQAYGSIDHVLWIAPSHRGSIGSDGQEEAVLHLFKLVKACLQLGYGEKQLEWSLVTVQAQPVTQHEAVQPAHASIHGLAGTMAKEYPHWKIRLLDLEKGCTWPVNHMFALPADRLGHAWAYRNQQWHQQQLIPYRSSLSGDTLYRKGGVYVVIGGAGYIGEAWSEYMIRRYQAQIVWIGRSQLNAAIQSKIDRLSALGPEPFYIAADAADKHSLQQAYEQVKKRHPHIHGIVHSAMVLFEQSLEKMKPEEFTAGLAAKIDVSIRMAQVFRQENVDFVLFFSSLVAHIKNVKQSHYASGCTFADAFAHQLSQSWACPVKVMNWGYWGNSEAAEDEHYVQLMNQIGLGLIEPAEAMKALEALLSGPVSQTAFIHTTKPVAVEGVNQNEFITLYPEQPSADAESLMERLPTTGRFQRVTHEELDDLLYRLLLGQLQTAELFDGYTLSVERLQQYKTREFYGKWIRQSSEFLLQHGYLKKVGDSLVRKDQAEDIELLWLEWNAKKEKWLKDSETKAMVVLAEAMLQALPDILTGKVPATDIMFPHSSMELVEGIYKHNQVADYFNKVLADTLLAYLDERLKHDPEASIRIMEIGAGTGGTSAGIFEKLKPYQKHINEYCYTDLSKAFLLHAEKEYGAENPYLTYQLFDVEKPIDQQEFEAGGYDVVIAANVLHATKNIRQTLRHTKAVMKNNGMLLLNEMAGNSLFPHITFGLLEGWWLYEDPAVRIPGCPGLHPDSWKAALESEGFESVFFPAEAAHDLSHQIVAASSNGLVRRMMKNVILPEKVVSQASNQEPAYIHTIDSEEAGQSKHALLREKSTEYMKKLIGETLKIPAGKIESSEPLEKYGIDSIVVVQLTNTLRKEFDHVSSTLFFEYQTIDALVEHFIKTKTEALMKLTGLDRQVQQHTPAESRTQSSQKPDQAAKRTRRFRKLGFSGEKETPTNTLASRDVAVIGISGRYPQAETAEDFWNNLKEGRNCIEEIPKDRWDWKAYYDKEKGKEGSIYTKWGGFIKDMDKFDPLFFQISPLEAERMDPQERLFLQTAYASIEDAGYTPDSLCSSRKIGVFAGVMNKNYPTGYGYWSIANRISYLLNFQGPSLAVDTACSSSLTAIHLALESIYSGSSDCAIAGGVNLVVDPVHYQNLSVMNMLSASDTCKSFGDDADGFVDGEGVGAIVLKPLQQAIADGDHIYGVIKASAINSGGKTNGYTVPNPHAQAQVIKEAIERADIPARTISYLEAHGTGTALGDPIEIAGLTKAFEKDTQEKQFCAIGSSKSNIGHCESAAGIAGLTKILFQFKYGQIAPSLHAQRLNPNIEFSHTPFVVQQQLGEWKRPVIGGQEVPRRAGLSSFGAGGSNAHIILEEYIPRTGAQTPKDHPPALIVLSAKNMERLQEKAEQLLTAIKQKRYCETDLIRIAYTLQTGREAMEERLAFIAESLEDLERKLNDFIENKADSLYLDRIDDNKKALAVLSADEDTEKIIEAWMSKGKYTKLLDLWVKGLSFDWGMLYGTQTPVRISLPAYPFAKERYWAPGAAKAPVSIEQDHDQQTEEPFKVMTFQEVWKEEPATLTSKRIKTLICFLTEREKQNAFASALKNVDQDTKVIFISQGEVYSKQSEYSYQIVRQEPVTFEKAFQSIKEELGEPDAILYMWPMEDKRCIKDHSCIVYLLQGMSAAKLHPSRLLLAGCFEDSLDRSYLESWIGFERSLGLVLPHTKVTGIFQPAEQGSMDDWTRKVWAELQASTEQTVLYQNLKRYVNHIEQTTIQPDNSKLKSGGTYLITGGVGGLGYLFAKHLAKNYAANLILTGRSPFNDEKQKQIKELKDLGGEAMYAEADVSDPIAMGDCVKRGKDRFGAINGVIHAAGIESDSAIFDKKIESFQRIIEPKINGTIALDEWLKNEDLDFMCYFSSSSAVLGDFGCCDYAIGNRFQMAYAQYRNELHNGKTFVINWPVWKDGGMKIGDEETTDMYLKSSGQRFLEAEEGIRMFEHILAQQDAQHLVIAGQPSRVSRFLGMTEPAIPEPATQAPLAQENKDEVKTLSIEKRLEHDLKEHIHTLLKISKDKLNLNKNWADFGFDSIYLAKFSNVLSKHFNIEVTPALFFGYSTLQELISFFLTDHKELIEAFYRDDASEAQKPPEAYAVIPVALEPEASKKSIRQVHDEPIAIIGMSGRFPQADSVHELWDNLKNGKSCISDIPGERRDWGRANRDPEKAVPRWGAFLKDIDRFDPLFFQISPKEAESMDPRQRIFLEEAWHTFEDAGYMGDRIKGKSCGVYVGVEEGEYAHLTGDTDYINGTQNATLSARIAYALDLKGPNMALTAACSSGLVAIHQACSALRQGDCEMALAGGVSLNISHMSFEALTRAEMLSPNGQCKVFDQDANGLVPGEAVAAVLLKPLSKAIEDKDHIYGCIKASGVNYDGKTNGITAPNPFSQAELIENIYEKNEINPLDIQYVMAHSTGSNLGDPLEVQALTSVFSKYTKQKQFCMISSIKPLIGHTFAASGTVALISMLMAMKNQIIPATHHCESENPYIPFKESPFVLCKENRSWIKKNQKPRMGTISTTGISGTNAHAVIEEYIPDDQPSTQRHQGSPQIFVISAQNDDRLQDAACRMIAYLEQNHNLSLPDVAYTLQVGRKAMEARLAIVANNQEQLVRKLKEYVEAMKNGGVSGQQRSLYTGYTEGILEEQDEAVLQALAKERNLENIAECWVKGYQIPWELLHDGDDVRMVSLPGYPFARERYWISSGTQQSEAVKQHSQDMKTEIDEPNGKTHIQKIIVQFLARELGISEDRINFKRNFLDYGMDSILGRKLMRHIEKTTQLKMAGREILECQTVQALSDHLALKAEKQNHSAAAHHIKGTYTDEQIIGLMQEVALGKLDFKSVQNIIEGSKSYES.

Residues 1 to 114 (MITEQLHISL…ADMHRKEQTA (114 aa)) form an N-terminal hotdog fold 1 region. The PKS/mFAS DH 1 domain occupies 1-271 (MITEQLHISL…GKSVRNMSAF (271 aa)). Histidine 18 functions as the Proton acceptor; for dehydratase activity 1 in the catalytic mechanism. A C-terminal hotdog fold 1 region spans residues 129-271 (DRILNLDEIY…GKSVRNMSAF (143 aa)). The active-site Proton donor; for dehydratase activity 1 is the aspartate 190. One can recognise a Carrier 1 domain in the interval 293-367 (PAFEMYLRQL…ELAAHLADHY (75 aa)). Serine 327 is modified (O-(pantetheine 4'-phosphoryl)serine). The Ketosynthase family 3 (KS3) 1 domain maps to 393–831 (GEDIAIIGMA…GSNAHLILEE (439 aa)). Active-site for beta-ketoacyl synthase 1 activity residues include cysteine 569, histidine 704, and histidine 744. The tract at residues 1009-1135 (HPLVHRNTSD…GRAVISDEAE (127 aa)) is N-terminal hotdog fold 2. Residues 1009-1301 (HPLVHRNTSD…MRALDGEQHS (293 aa)) enclose the PKS/mFAS DH 2 domain. The Proton acceptor; for dehydratase activity 2 role is filled by histidine 1038. The segment at 1149 to 1301 (SLDTVTSEQC…MRALDGEQHS (153 aa)) is C-terminal hotdog fold 2. Aspartate 1211 functions as the Proton donor; for dehydratase activity 2 in the catalytic mechanism. The region spanning 2188-2261 (EKSTEYMKKL…ALVEHFIKTK (74 aa)) is the Carrier 2 domain. O-(pantetheine 4'-phosphoryl)serine is present on serine 2222. Polar residues predominate over residues 2275 to 2291 (VQQHTPAESRTQSSQKP). The tract at residues 2275–2313 (VQQHTPAESRTQSSQKPDQAAKRTRRFRKLGFSGEKETP) is disordered. The Ketosynthase family 3 (KS3) 2 domain occupies 2319–2734 (SRDVAVIGIS…GSNAHIILEE (416 aa)). Residues cysteine 2476, histidine 2611, and histidine 2651 each act as for beta-ketoacyl synthase 2 activity in the active site. The stretch at 2750–2826 (ALIVLSAKNM…DFIENKADSL (77 aa)) forms a coiled coil. In terms of domain architecture, Carrier 3 spans 3409 to 3486 (SIEKRLEHDL…ELISFFLTDH (78 aa)). Serine 3446 carries the O-(pantetheine 4'-phosphoryl)serine modification. The region spanning 3529–3944 (DEPIAIIGMS…GTNAHAVIEE (416 aa)) is the Ketosynthase family 3 (KS3) 3 domain. Catalysis depends on for beta-ketoacyl synthase 3 activity residues cysteine 3690, histidine 3825, and histidine 3865. Positions 4004 to 4033 (KAMEARLAIVANNQEQLVRKLKEYVEAMKN) form a coiled coil. Residues 4135–4212 (NGKTHIQKII…ALSDHLALKA (78 aa)) enclose the Carrier 4 domain. The residue at position 4172 (serine 4172) is an O-(pantetheine 4'-phosphoryl)serine.

The cofactor is pantetheine 4'-phosphate.

The protein localises to the cytoplasm. It participates in antibiotic biosynthesis; bacillaene biosynthesis. Functionally, involved in some intermediate steps for the synthesis of the antibiotic polyketide bacillaene which is involved in secondary metabolism. This chain is Polyketide synthase PksM (pksM), found in Bacillus subtilis (strain 168).